The sequence spans 598 residues: MLKRCLSPLTLVNQVALIVLLSTAIGLAGMAVSGWLVQGVQGSAHAINKAGSLRMQSYRLLAAVPLSEKDKPLIKEMEQTAFSAELTRAAERDGQLAQLQGLQDYWRNELIPALMRAQNRETVSADVSQFVAGLDQLVSGFDRTTEMRIETVVLVHRVMAVFMALLLVFTIIWLRARLLQPWRQLLAMASAVSHRDFTQRANISGRNEMAMLGTALNNMSAELAESYAVLEQRVQEKTAGLEHKNQILSFLWQANRRLHSRAPLCERLSPVLNGLQNLTLLRDIELRVYDTDDEENHQEFTCQPDMTCDDKGCQLCPRGVLPVGDRGTTLKWRLADSHTQYGILLATLPQGRHLSHDQQQLVDTLVEQLTATLALDRHQERQQQLIVMEERATIARELHDSIAQSLSCMKMQVSCLQMQGDALPESSRELLSQIRNELNASWAQLRELLTTFRLQLTEPGLRPALEASCEEYSAKFGFPVKLDYQLPPRLVPSHQAIHLLQIAREALSNALKHSQASEVVVTVAQNDNQVKLTVQDNGCGVPENAIRSNHYGMIIMRDRAQSLRGDCRVRRRESGGTEVVVTFIPEKTFTDVQGDTHE.

At 1 to 14 the chain is on the cytoplasmic side; the sequence is MLKRCLSPLTLVNQ. The helical transmembrane segment at 15–37 threads the bilayer; it reads VALIVLLSTAIGLAGMAVSGWLV. Topologically, residues 38 to 151 are periplasmic; sequence QGVQGSAHAI…DRTTEMRIET (114 aa). Residues 152-174 traverse the membrane as a helical segment; sequence VVLVHRVMAVFMALLLVFTIIWL. Over 175 to 598 the chain is Cytoplasmic; sequence RARLLQPWRQ…FTDVQGDTHE (424 aa). The HAMP domain maps to 176 to 228; it reads ARLLQPWRQLLAMASAVSHRDFTQRANISGRNEMAMLGTALNNMSAELAESYA. A Histidine kinase domain is found at 393–587; sequence TIARELHDSI…EVVVTFIPEK (195 aa). H399 carries the post-translational modification Phosphohistidine; by autocatalysis.

The protein localises to the cell inner membrane. The catalysed reaction is ATP + protein L-histidine = ADP + protein N-phospho-L-histidine.. Its function is as follows. Acts as a sensor for nitrate/nitrite and transduces signal of nitrate availability to the NarL protein and of both nitrate/nitrite to the NarP protein. NarX probably activates NarL and NarP by phosphorylation in the presence of nitrate. NarX also plays a negative role in controlling NarL activity, probably through dephosphorylation in the absence of nitrate. The polypeptide is Nitrate/nitrite sensor protein NarX (narX) (Escherichia coli O157:H7).